We begin with the raw amino-acid sequence, 630 residues long: Plastin-1 (630 aa).

At methionine 1 the chain carries N-acetylmethionine. EF-hand domains are found at residues 11–46 (EELE…ASLP) and 51–86 (KVRE…LKSK). Residues aspartate 24, aspartate 26, serine 28, tyrosine 30, glutamate 35, aspartate 64, asparagine 66, aspartate 68, arginine 70, and glutamate 75 each contribute to the Ca(2+) site. 2 actin-binding regions span residues 108 to 381 (TSSI…GLHK) and 382 to 626 (PDNN…GKGL). Calponin-homology (CH) domains lie at 122-238 (EEEK…KVGL), 266-377 (LSPE…NTYP), 396-505 (SKEE…RRYT), and 517-626 (KVND…GKGL).

As to quaternary structure, monomer. In terms of processing, phosphorylated.

It is found in the cytoplasm. Its subcellular location is the cell projection. The protein resides in the stereocilium. Actin-bundling protein. In the inner ear, it is required for stereocilia formation. Mediates liquid packing of actin filaments that is necessary for stereocilia to grow to their proper dimensions. This chain is Plastin-1 (PLS1), found in Bos taurus (Bovine).